The chain runs to 634 residues: BTB/POZ domain-containing protein At1g03010 (634 aa).

In terms of domain architecture, BTB spans 38–103 (SDLTVQVGSS…CYGINIEINL (66 aa)). An NPH3 domain is found at 205–503 (DWWGKSLAVL…VQVLYFEQIR (299 aa)). At Y444 the chain carries Phosphotyrosine. A coiled-coil region spans residues 542–580 (RDNYASVRRENRELKLEVARMRMRLTDLEKDHISIKQEL).

The protein belongs to the NPH3 family.

It participates in protein modification; protein ubiquitination. Its function is as follows. May act as a substrate-specific adapter of an E3 ubiquitin-protein ligase complex (CUL3-RBX1-BTB) which mediates the ubiquitination and subsequent proteasomal degradation of target proteins. This Arabidopsis thaliana (Mouse-ear cress) protein is BTB/POZ domain-containing protein At1g03010.